The primary structure comprises 93 residues: Cell division topological specificity factor (93 aa).

The protein belongs to the MinE family.

Functionally, prevents the cell division inhibition by proteins MinC and MinD at internal division sites while permitting inhibition at polar sites. This ensures cell division at the proper site by restricting the formation of a division septum at the midpoint of the long axis of the cell. In Alkaliphilus oremlandii (strain OhILAs) (Clostridium oremlandii (strain OhILAs)), this protein is Cell division topological specificity factor.